Here is a 99-residue protein sequence, read N- to C-terminus: Nucleoid-associated protein SSA_0326 (99 aa).

A compositionally biased stretch (low complexity) spans 1 to 15 (MMNMQSMMKQAQKLQ). Residues 1 to 23 (MMNMQSMMKQAQKLQKQMEKGQA) form a disordered region.

The protein belongs to the YbaB/EbfC family. Homodimer.

It is found in the cytoplasm. Its subcellular location is the nucleoid. Functionally, binds to DNA and alters its conformation. May be involved in regulation of gene expression, nucleoid organization and DNA protection. The protein is Nucleoid-associated protein SSA_0326 of Streptococcus sanguinis (strain SK36).